Consider the following 115-residue polypeptide: MKNRDVIVKAGSRVLKSTPRKLNLVAGLVRNKKVSFATVQLRFCEKKAAGLIRKVLNSAIANAQNYGLDIDNLYIKEILIGKSLTLRRVCPKAMGRANRVSKRYSNITVKLGEII.

The protein belongs to the universal ribosomal protein uL22 family. Part of the 50S ribosomal subunit.

Its function is as follows. This protein binds specifically to 23S rRNA; its binding is stimulated by other ribosomal proteins, e.g. L4, L17, and L20. It is important during the early stages of 50S assembly. It makes multiple contacts with different domains of the 23S rRNA in the assembled 50S subunit and ribosome. Functionally, the globular domain of the protein is located near the polypeptide exit tunnel on the outside of the subunit, while an extended beta-hairpin is found that lines the wall of the exit tunnel in the center of the 70S ribosome. The polypeptide is Large ribosomal subunit protein uL22 (rplV) (Wolbachia pipientis wMel).